We begin with the raw amino-acid sequence, 361 residues long: Protein RecA (361 aa).

77 to 84 serves as a coordination point for ATP; the sequence is GPESSGKT.

It belongs to the RecA family.

It localises to the cytoplasm. Functionally, can catalyze the hydrolysis of ATP in the presence of single-stranded DNA, the ATP-dependent uptake of single-stranded DNA by duplex DNA, and the ATP-dependent hybridization of homologous single-stranded DNAs. It interacts with LexA causing its activation and leading to its autocatalytic cleavage. The protein is Protein RecA of Brucella suis (strain ATCC 23445 / NCTC 10510).